Reading from the N-terminus, the 119-residue chain is Protein ELF4-LIKE 2 (119 aa).

The segment at 91-119 is disordered; sequence SVDASSEGESTGTLKSDGKANNQKRFRSG. A compositionally biased stretch (polar residues) spans 93–111; that stretch reads DASSEGESTGTLKSDGKAN.

Belongs to the EARLY FLOWERING 4 family. Homodimer.

The protein localises to the nucleus. Functionally, component of the central CCA1/LHY-TOC1 feedback loop in the circadian clock that promotes clock accuracy and is required for sustained rhythms in the absence of daily light/dark cycles. The chain is Protein ELF4-LIKE 2 (EFL2) from Arabidopsis thaliana (Mouse-ear cress).